The chain runs to 239 residues: Ribosomal RNA small subunit methyltransferase G (239 aa).

Residues Gly-76, Phe-81, 99–101, 128–129, and Arg-147 each bind S-adenosyl-L-methionine; these read DSS and IE.

Belongs to the methyltransferase superfamily. RNA methyltransferase RsmG family.

It is found in the cytoplasm. Functionally, specifically methylates the N7 position of a guanine in 16S rRNA. This chain is Ribosomal RNA small subunit methyltransferase G, found in Prochlorococcus marinus (strain MIT 9515).